The primary structure comprises 197 residues: Holliday junction branch migration complex subunit RuvA (197 aa).

The domain I stretch occupies residues 1 to 63; it reads MYDYIKGNLT…EDAHLLYGFH (63 aa). The interval 64 to 142 is domain II; it reads TEDEKAVFLN…DINEVSTDKS (79 aa). Residues 143–147 are flexible linker; that stretch reads KVSTI. A domain III region spans residues 148–197; it reads NNNQELEEAVEALLALGYKTNELKKIEKFFEGTTDTAENYIKSALKMLMK.

It belongs to the RuvA family. As to quaternary structure, homotetramer. Forms an RuvA(8)-RuvB(12)-Holliday junction (HJ) complex. HJ DNA is sandwiched between 2 RuvA tetramers; dsDNA enters through RuvA and exits via RuvB. An RuvB hexamer assembles on each DNA strand where it exits the tetramer. Each RuvB hexamer is contacted by two RuvA subunits (via domain III) on 2 adjacent RuvB subunits; this complex drives branch migration. In the full resolvosome a probable DNA-RuvA(4)-RuvB(12)-RuvC(2) complex forms which resolves the HJ.

The protein localises to the cytoplasm. The RuvA-RuvB-RuvC complex processes Holliday junction (HJ) DNA during genetic recombination and DNA repair, while the RuvA-RuvB complex plays an important role in the rescue of blocked DNA replication forks via replication fork reversal (RFR). RuvA specifically binds to HJ cruciform DNA, conferring on it an open structure. The RuvB hexamer acts as an ATP-dependent pump, pulling dsDNA into and through the RuvAB complex. HJ branch migration allows RuvC to scan DNA until it finds its consensus sequence, where it cleaves and resolves the cruciform DNA. In Streptococcus mutans serotype c (strain ATCC 700610 / UA159), this protein is Holliday junction branch migration complex subunit RuvA.